Here is a 432-residue protein sequence, read N- to C-terminus: Hexane cyclase pydB (432 aa).

A signal peptide spans 1–20 (MMHQSLGLGLVVFVAAPVVA). Residues Asn-59, Asn-78, Asn-153, and Asn-308 are each glycosylated (N-linked (GlcNAc...) asparagine).

Belongs to the Diels-Alderase family.

It participates in mycotoxin biosynthesis. Functionally, hexane cyclase; part of the gene cluster that mediates the biosynthesis of pyrrocidines, fungal natural products containing a macrocyclic para-cyclophane connected to a decahydrofluorene ring system that show potent antibiotic activities toward Gram-negative bacteria. Within the pathway, pydB functions synergistically with pydE, pydX and pydZ to form the cyclophane. The pathway begins with the PKS-NRPS pydA which, with the help of the trans-enoyl reductase pydC, synthesizes the polyketide-tyrosyl acyl thioester product which can be reductively off-loaded by the terminal reductase (R) domain in pydA. The alpha/beta hydrolase pydG is then required to catalyze the subsequent Knoevenagel condensation that affords the 3-pyrrolin-2-one ring, whereas the four proteins pydB, pydE, pydX and pydZ then function synergistically to form the cyclophane. PydB and the membrane-bound pydX and pydZ are lipid-binding proteins that can sequester and mold the pdyG product into the inverse S-shape. Binding of the medium chain reductase pydE to the complex would trigger the cascade oxidative cyclization. PydY is involved the Diels-Alder cycloaddition that forms the decahydrofluorene core. Additional non-enzymatic hydroxylation yields pyrrocidine A2 which can be further reduced into pyrrocidine B by an endogenous reductase. This is Hexane cyclase pydB from Acremonium sp.